We begin with the raw amino-acid sequence, 86 residues long: Small ribosomal subunit protein bS20 (86 aa).

The span at 1-27 shows a compositional bias: basic residues; the sequence is MANSKSAKKRATQAERRRQHNASRRSM. Residues 1–28 form a disordered region; that stretch reads MANSKSAKKRATQAERRRQHNASRRSMM.

This sequence belongs to the bacterial ribosomal protein bS20 family.

Its function is as follows. Binds directly to 16S ribosomal RNA. In Aliivibrio salmonicida (strain LFI1238) (Vibrio salmonicida (strain LFI1238)), this protein is Small ribosomal subunit protein bS20.